A 311-amino-acid polypeptide reads, in one-letter code: Ribonuclease 3 (311 aa).

Residues 20-145 (YLCFYRILGF…FIGAIYLDQG (126 aa)) enclose the RNase III domain. Residue glutamate 62 coordinates Mg(2+). Aspartate 66 is an active-site residue. Positions 131 and 134 each coordinate Mg(2+). Residue glutamate 134 is part of the active site. Residues 173–242 (NFKSKLIEWS…AQMAIKKVKD (70 aa)) form the DRBM domain. Positions 250–311 (NEAKSQHSKP…EVEATETEKE (62 aa)) are disordered. Acidic residues predominate over residues 262–288 (VETESVEPELTESETMEPDTLETEAPE).

The protein belongs to the ribonuclease III family. In terms of assembly, homodimer. The cofactor is Mg(2+).

It is found in the cytoplasm. The catalysed reaction is Endonucleolytic cleavage to 5'-phosphomonoester.. Its function is as follows. Digests double-stranded RNA. Involved in the processing of primary rRNA transcript to yield the immediate precursors to the large and small rRNAs (23S and 16S). Processes some mRNAs, and tRNAs when they are encoded in the rRNA operon. Processes pre-crRNA and tracrRNA of type II CRISPR loci if present in the organism. This is Ribonuclease 3 from Bacteroides thetaiotaomicron (strain ATCC 29148 / DSM 2079 / JCM 5827 / CCUG 10774 / NCTC 10582 / VPI-5482 / E50).